The primary structure comprises 445 residues: FAS-associated factor 2-B (445 aa).

The UBA domain maps to D12–Q48. Residues S275 to E353 are a coiled coil. The disordered stretch occupies residues R302–V355. A compositionally biased stretch (basic and acidic residues) spans A303 to E348. The region spanning D357–V439 is the UBX domain.

The protein resides in the cytoplasm. It is found in the lipid droplet. Its subcellular location is the endoplasmic reticulum. Functionally, plays an important role in endoplasmic reticulum-associated degradation (ERAD) that mediates ubiquitin-dependent degradation of misfolded endoplasmic reticulum proteins. Involved in inhibition of lipid droplet degradation. Involved in stress granule disassembly. In Xenopus laevis (African clawed frog), this protein is FAS-associated factor 2-B (faf2-b).